Consider the following 328-residue polypeptide: Formimidoylglutamase (328 aa).

Mn(2+) contacts are provided by histidine 133, aspartate 159, histidine 161, aspartate 163, aspartate 253, and aspartate 255.

The protein belongs to the arginase family. It depends on Mn(2+) as a cofactor.

The enzyme catalyses N-formimidoyl-L-glutamate + H2O = formamide + L-glutamate. Its pathway is amino-acid degradation; L-histidine degradation into L-glutamate; L-glutamate from N-formimidoyl-L-glutamate (hydrolase route): step 1/1. Its function is as follows. Catalyzes the conversion of N-formimidoyl-L-glutamate to L-glutamate and formamide. The polypeptide is Formimidoylglutamase (Streptococcus pyogenes serotype M5 (strain Manfredo)).